We begin with the raw amino-acid sequence, 143 residues long: Large ribosomal subunit protein uL11 (143 aa).

Belongs to the universal ribosomal protein uL11 family. In terms of assembly, part of the ribosomal stalk of the 50S ribosomal subunit. Interacts with L10 and the large rRNA to form the base of the stalk. L10 forms an elongated spine to which L12 dimers bind in a sequential fashion forming a multimeric L10(L12)X complex. In terms of processing, one or more lysine residues are methylated.

Functionally, forms part of the ribosomal stalk which helps the ribosome interact with GTP-bound translation factors. The chain is Large ribosomal subunit protein uL11 from Kocuria rhizophila (strain ATCC 9341 / DSM 348 / NBRC 103217 / DC2201).